A 68-amino-acid chain; its full sequence is MGMRMMFTVFLLVVLATTVVSFTSDRAFDGRNAAASDKASDLISLAVRGCCSHPACSVNNPYFCGGKR.

Positions 1–21 (MGMRMMFTVFLLVVLATTVVS) are cleaved as a signal peptide. Residues 22-48 (FTSDRAFDGRNAAASDKASDLISLAVR) constitute a propeptide that is removed on maturation. Disulfide bonds link Cys50–Cys56 and Cys51–Cys64. The interval 52–54 (SHP) is ser-Xaa-Pro motif, crucial for potent interaction with nAChR. Cys64 carries the cysteine amide modification. The propeptide occupies 65 to 68 (GGKR).

Belongs to the conotoxin A superfamily. Expressed by the venom duct.

It localises to the secreted. In terms of biological role, alpha-conotoxins act on postsynaptic membranes, they bind to the nicotinic acetylcholine receptors (nAChR) and thus inhibit them. This chain is Alpha-conotoxin-like Lp1.2, found in Conus leopardus (Leopard cone).